A 501-amino-acid chain; its full sequence is MLPKVETEALGLARSNGEQGQMPENMQVSQFKMVNYSYDEDLEELCPVCGDKVSGYHYGLLTCESCKGFFKRTVQNNKRYTCIENQNCQIDKTQRKRCPYCRFQKCLSVGMKLEAVRADRMRGGRNKFGPMYKRDRALKQQKKALIRANGLKLEAMTQVIQAMPTDLTISSAIQNIHSASKGLPLNHTALPPTDYDRSPFVTSPISMTMPPHGSLQGYQTYGHFPSRAIKSEYPDPYTSSPESIMGYSYMDGYQTSSPASIPHLILELQKCEPDEPQVQAKIMAYLQQEQANRSKHEKLNTFGLMCKMADQTLFSIVEWARSSIFFRELKVDDQMKLLQNCWSELLILDHIYRQVVHVKEGSILLVTGQQVDYSVIASQAGATLNNLMSHAQELVAKLRSLQFDLREFVCLKFLVLFSLDVKNLENFQLVEGVQEQVNAALLDYTMCNYPQQTDKFGQLLLRLPEIRAISMQAEEYLYCKHLNGDVPCNNLLIEMLHAKRA.

The segment at residues Glu-43 to Glu-114 is a DNA-binding region (nuclear receptor). The Zn(2+) site is built by Cys-46, Cys-49, Cys-63, Cys-66, Cys-82, Cys-88, Cys-98, and Cys-101. NR C4-type zinc fingers lie at residues Cys-46–Cys-66 and Cys-82–Cys-106. Positions Lys-112–Lys-127 are C-terminal extension (CTE). Residues Phe-128–Arg-147 carry the FTZ-F1 box motif. A disordered region spans residues Asn-186–Met-207. Residues Ser-260 to Lys-499 form the NR LBD domain. Residues Gly-381–Leu-384, Tyr-476, and Lys-480 each bind a phospholipid derivative. An AF-2 region spans residues Cys-488–Lys-499.

The protein belongs to the nuclear hormone receptor family. NR5 subfamily. As to quaternary structure, monomer; Binds DNA as a monomer. Detected in liver and adrenal gland.

The protein localises to the nucleus. It is found in the chromosome. Functionally, orphan nuclear receptor that binds DNA as a monomer to the 5'-TCAAGGCCA-3' sequence and controls expression of target genes: regulates key biological processes, such as cholesterol and bile acid synthesis pathways, as well as cartilage, liver and pancreas morphogenesis. Ligand-binding causes conformational change which causes recruitment of coactivators, promoting target gene activation. The specific ligand is unknown, but specific phospholipids, such as phosphatidylethanolamine, phosphatidylserine, dilauroyl phosphatidylcholine and diundecanoyl phosphatidylcholine can act as ligand in vitro. Acts as a pioneer transcription factor, which unwraps target DNA from histones and elicits local opening of closed chromatin. Involved in the formation of connective tissue in lower jaw. The protein is Nuclear receptor subfamily 5 group A member 2 of Gallus gallus (Chicken).